A 339-amino-acid chain; its full sequence is DNA-directed RNA polymerase subunit alpha (339 aa).

The interval 1–238 is alpha N-terminal domain (alpha-NTD); sequence MVDPIVTKNW…EQLSIFINFD (238 aa). The interval 250–339 is alpha C-terminal domain (alpha-CTD); the sequence is VEEQKLNENL…KAAPQGAPKV (90 aa).

The protein belongs to the RNA polymerase alpha chain family. In terms of assembly, homodimer. The RNAP catalytic core consists of 2 alpha, 1 beta, 1 beta' and 1 omega subunit. When a sigma factor is associated with the core the holoenzyme is formed, which can initiate transcription.

It catalyses the reaction RNA(n) + a ribonucleoside 5'-triphosphate = RNA(n+1) + diphosphate. In terms of biological role, DNA-dependent RNA polymerase catalyzes the transcription of DNA into RNA using the four ribonucleoside triphosphates as substrates. This chain is DNA-directed RNA polymerase subunit alpha, found in Anaeromyxobacter dehalogenans (strain 2CP-C).